The sequence spans 167 residues: uncharacterized protein (167 aa).

The protein to B.subtilis XkdI.

This is an uncharacterized protein from Bacillus subtilis (strain 168).